Consider the following 215-residue polypeptide: Beta-crystallin A3 (215 aa).

At Met1 the chain carries N-acetylmethionine. The interval Met1 to Met24 is disordered. The interval Met1 to Pro30 is N-terminal arm. Position 2 is an N-acetylalanine (Glu2). 2 consecutive Beta/gamma crystallin 'Greek key' domains span residues Trp31–Cys70 and Gly71–Cys117. S-glutathionyl cysteine; alternate is present on residues Cys82 and Cys117. Residues Cys82 and Cys117 each carry the S-methylcysteine; alternate modification. The connecting peptide stretch occupies residues Ser118–Glu123. Beta/gamma crystallin 'Greek key' domains are found at residues Ser124–Cys165 and Gly166–Gln214.

Belongs to the beta/gamma-crystallin family. In terms of assembly, homo/heterodimer, or complexes of higher-order. The structure of beta-crystallin oligomers seems to be stabilized through interactions between the N-terminal arms. Interacts with CRYBA1. In terms of processing, specific cleavages in the N-terminal arm occur during lens maturation and give rise to several truncated forms. Isoform A1 contains a N-acetylalanine at position 2.

Functionally, crystallins are the dominant structural components of the vertebrate eye lens. The protein is Beta-crystallin A3 of Bos taurus (Bovine).